We begin with the raw amino-acid sequence, 428 residues long: MAKIVDIKGREVLDSRGNPTVEADVLLDNGIIGSACAPSGASTGSREALELRDGDKSRYMGKGVLKAVANINGPIRDLLLGKDPVDQKALDHAMIALDATENKASLGANAILAVSLAAAKAAAQDQDLPLYAHIANLNGTPGVYSMPVPMMNIINGGEHADNNIDIQEFMIQPVGAKSFAEALRWGTEIFHHLKAVLKARGLNTAVGDEGGFAPNLASNKEALEAIAEAVANAGYTLGTDVTLALDCAASEFYKNGKYTLSEEGEYSSAEFAEYLAELTRKHPIISIEDGLDESDWDGWKVLTEKIGEKVQLVGDDLFVTNTKILKEGIDKNIANSILIKFNQIGTLTETLEAIQMAKAAGYTAIISHRSGETEDSTIADLAVGTSAGQIKTGSLCRSDRVSKYNQLLRIEEQLGSKAVYRGRAEFRG.

Glutamine 167 is a binding site for (2R)-2-phosphoglycerate. Glutamate 209 functions as the Proton donor in the catalytic mechanism. Mg(2+) contacts are provided by aspartate 246, glutamate 288, and aspartate 315. The (2R)-2-phosphoglycerate site is built by lysine 340, arginine 369, serine 370, and lysine 391. Lysine 340 acts as the Proton acceptor in catalysis.

It belongs to the enolase family. As to quaternary structure, component of the RNA degradosome, a multiprotein complex involved in RNA processing and mRNA degradation. Mg(2+) is required as a cofactor.

Its subcellular location is the cytoplasm. It is found in the secreted. The protein localises to the cell surface. The enzyme catalyses (2R)-2-phosphoglycerate = phosphoenolpyruvate + H2O. Its pathway is carbohydrate degradation; glycolysis; pyruvate from D-glyceraldehyde 3-phosphate: step 4/5. Catalyzes the reversible conversion of 2-phosphoglycerate (2-PG) into phosphoenolpyruvate (PEP). It is essential for the degradation of carbohydrates via glycolysis. The polypeptide is Enolase 1 (Pseudomonas syringae pv. tomato (strain ATCC BAA-871 / DC3000)).